A 428-amino-acid chain; its full sequence is 3-phosphoshikimate 1-carboxyvinyltransferase (428 aa).

3 residues coordinate 3-phosphoshikimate: Lys-23, Ser-24, and Arg-28. A phosphoenolpyruvate-binding site is contributed by Lys-23. Phosphoenolpyruvate-binding residues include Gly-97 and Arg-125. 3-phosphoshikimate-binding residues include Ser-170, Ser-171, Gln-172, Ser-198, Asp-314, Asn-337, and Lys-341. Phosphoenolpyruvate is bound at residue Gln-172. Asp-314 (proton acceptor) is an active-site residue. The phosphoenolpyruvate site is built by Arg-345, Arg-387, and Lys-412.

The protein belongs to the EPSP synthase family. As to quaternary structure, monomer.

The protein resides in the cytoplasm. It carries out the reaction 3-phosphoshikimate + phosphoenolpyruvate = 5-O-(1-carboxyvinyl)-3-phosphoshikimate + phosphate. Its pathway is metabolic intermediate biosynthesis; chorismate biosynthesis; chorismate from D-erythrose 4-phosphate and phosphoenolpyruvate: step 6/7. In terms of biological role, catalyzes the transfer of the enolpyruvyl moiety of phosphoenolpyruvate (PEP) to the 5-hydroxyl of shikimate-3-phosphate (S3P) to produce enolpyruvyl shikimate-3-phosphate and inorganic phosphate. This Yersinia pseudotuberculosis serotype IB (strain PB1/+) protein is 3-phosphoshikimate 1-carboxyvinyltransferase.